A 457-amino-acid chain; its full sequence is L-lysine-epsilon aminotransferase (457 aa).

2 residues coordinate pyridoxal 5'-phosphate: G131 and A132. 2 residues coordinate 2-oxoglutarate: R172 and Q278. R172 lines the L-lysine pocket. Q278 contributes to the pyridoxal 5'-phosphate binding site. K304 carries the N6-(pyridoxal phosphate)lysine modification. R427 is a 2-oxoglutarate binding site.

This sequence belongs to the class-III pyridoxal-phosphate-dependent aminotransferase family. As to quaternary structure, monomer. It depends on pyridoxal 5'-phosphate as a cofactor.

The enzyme catalyses L-lysine + 2-oxoglutarate = (S)-2-amino-6-oxohexanoate + L-glutamate. It functions in the pathway antibiotic biosynthesis; cephamycin C biosynthesis. Activity is induced in the presence of high concentrations of lysine, but not by L-alpha-aminoadipic acid. Not repressed by ammonium ions. Catalyzes the transfer of the terminal amino group of L-lysine to alpha-ketoglutarate to yield L-glutamate and 2-aminoadipate 6-semialdehyde ((S)-2-amino-6-oxohexanoate), which is spontaneously converted to the dehydrated form 1-piperideine 6-carboxylate. Shows a high specificity for L-lysine as substrate although L-ornithine can also be used, leading to the formation of an o-aminobenzaldehyde reactive compound. Only cis-oxaloacetate and pyruvate can replace alpha-ketoglutarate, but with very low efficiency. The polypeptide is L-lysine-epsilon aminotransferase (Streptomyces clavuligerus).